We begin with the raw amino-acid sequence, 548 residues long: Membrane protein insertase YidC (548 aa).

Residues 6-26 form a helical membrane-spanning segment; sequence NLLVIALLFVSFMIWQAWEQD. Residues 28–55 form a disordered region; that stretch reads NPQPQAQQTTQTTTTAAGSAADQGVPAS. Low complexity predominate over residues 30–50; sequence QPQAQQTTQTTTTAAGSAADQ. 4 consecutive transmembrane segments (helical) span residues 350–370, 420–440, 458–478, and 499–519; these read FVGNWGFSIIIITFIVRGIMY, LGGCFPLLIQMPIFLALYYML, LSAQDPYYILPILMGVTMFFI, and PVIFTVFFLWFPSGLVLYYIV.

It belongs to the OXA1/ALB3/YidC family. Type 1 subfamily. In terms of assembly, interacts with the Sec translocase complex via SecD. Specifically interacts with transmembrane segments of nascent integral membrane proteins during membrane integration.

Its subcellular location is the cell inner membrane. Its function is as follows. Required for the insertion and/or proper folding and/or complex formation of integral membrane proteins into the membrane. Involved in integration of membrane proteins that insert both dependently and independently of the Sec translocase complex, as well as at least some lipoproteins. Aids folding of multispanning membrane proteins. This Shigella flexneri protein is Membrane protein insertase YidC.